Consider the following 135-residue polypeptide: ATP synthase epsilon chain, chloroplastic (135 aa).

It belongs to the ATPase epsilon chain family. F-type ATPases have 2 components, CF(1) - the catalytic core - and CF(0) - the membrane proton channel. CF(1) has five subunits: alpha(3), beta(3), gamma(1), delta(1), epsilon(1). CF(0) has three main subunits: a, b and c.

It localises to the plastid. It is found in the chloroplast thylakoid membrane. Its function is as follows. Produces ATP from ADP in the presence of a proton gradient across the membrane. This chain is ATP synthase epsilon chain, chloroplastic, found in Euglena gracilis.